A 77-amino-acid polypeptide reads, in one-letter code: Thioredoxin (77 aa).

Catalysis depends on nucleophile residues cysteine 11 and cysteine 14. A disulfide bridge connects residues cysteine 11 and cysteine 14.

Belongs to the glutaredoxin family.

Functionally, does not function as a glutathione-disulfide oxidoreductase in the presence of glutathione and glutathione reductase. Has low thioredoxin activity in vitro. This chain is Thioredoxin, found in Methanothermobacter thermautotrophicus (strain ATCC 29096 / DSM 1053 / JCM 10044 / NBRC 100330 / Delta H) (Methanobacterium thermoautotrophicum).